A 233-amino-acid polypeptide reads, in one-letter code: Large ribosomal subunit protein uL22m (233 aa).

The protein belongs to the universal ribosomal protein uL22 family. As to quaternary structure, component of the mitochondrial ribosome large subunit (39S) which comprises a 16S rRNA and about 50 distinct proteins.

It localises to the mitochondrion. This Drosophila pseudoobscura pseudoobscura (Fruit fly) protein is Large ribosomal subunit protein uL22m (mRpL22).